Here is a 207-residue protein sequence, read N- to C-terminus: Small ribosomal subunit protein uS4 (207 aa).

Residues 33 to 54 form a disordered region; sequence KLDSKPGQHGRTSGARTSDYGN. Residues 42–53 show a composition bias toward polar residues; the sequence is GRTSGARTSDYG. In terms of domain architecture, S4 RNA-binding spans 97–160; that stretch reads SRLDNVVYRM…KKQVRIAEAL (64 aa).

It belongs to the universal ribosomal protein uS4 family. Part of the 30S ribosomal subunit. Contacts protein S5. The interaction surface between S4 and S5 is involved in control of translational fidelity.

Functionally, one of the primary rRNA binding proteins, it binds directly to 16S rRNA where it nucleates assembly of the body of the 30S subunit. Its function is as follows. With S5 and S12 plays an important role in translational accuracy. In Cupriavidus necator (strain ATCC 17699 / DSM 428 / KCTC 22496 / NCIMB 10442 / H16 / Stanier 337) (Ralstonia eutropha), this protein is Small ribosomal subunit protein uS4.